Reading from the N-terminus, the 118-residue chain is Large ribosomal subunit protein uL18 (118 aa).

It belongs to the universal ribosomal protein uL18 family. In terms of assembly, part of the 50S ribosomal subunit; part of the 5S rRNA/L5/L18/L25 subcomplex. Contacts the 5S and 23S rRNAs.

Its function is as follows. This is one of the proteins that bind and probably mediate the attachment of the 5S RNA into the large ribosomal subunit, where it forms part of the central protuberance. This is Large ribosomal subunit protein uL18 from Mycoplasmopsis pulmonis (strain UAB CTIP) (Mycoplasma pulmonis).